The sequence spans 248 residues: MKRSYDSINECGAYINNAADNICQCKMNRIDSAFGGWLTNLTEVYYCPTHNIYHHCDGDGTCIIVNSVCTRSGTCMGISTLVGVTHDLMDIDSLPAFDRFKLRMMNKGYFWISMQDRLKEELEEAKSGDEGMTMETHFRNKPDVESTLTRLYYYFKRELGMITRGTQESKLEKVYIMFEEMALRLLESRMTNHDKKQKLLAKVSKLISKQNTKSHFTTSVNKLITSDLTYPERIVKPLMDLKLSELYI.

This is an uncharacterized protein from Ostreid herpesvirus 1 (isolate France) (OsHV-1).